A 143-amino-acid chain; its full sequence is MLTTAKANPLEALRSAKENKELSGQLEHHRSLRAIKLKVLLYREEREAAGVPPDVISRECATLHGSLLRNYMEEAQEARRLGAAELAQKTAERFASAFQVRPGSLGDAFDRRHREVERQAAEGARKEAIERRIVERVKRIKGE.

The region spanning 27–70 is the CWF21 domain; the sequence is EHHRSLRAIKLKVLLYREEREAAGVPPDVISRECATLHGSLLRN.

The protein belongs to the CWC21 family. As to quaternary structure, associates with the NTC complex (or PRP19-associated complex). The NTC complex associates with the spliceosome after the release of the U1 and U4 snRNAs and forms the CWC spliceosome subcomplex reminiscent of a late-stage spliceosome. Associates specifically with U5-containing snRNPs.

It localises to the cytoplasm. It is found in the nucleus. In terms of biological role, essential protein involved in pre-mRNA cis- and trans-splicing. May function at or prior to the first catalytic step of splicing at the catalytic center of the spliceosome. May do so by stabilizing the catalytic center or the position of the RNA substrate. The polypeptide is Pre-mRNA-splicing factor U5-Cwc21 (Trypanosoma brucei brucei (strain 927/4 GUTat10.1)).